A 195-amino-acid polypeptide reads, in one-letter code: Cysteine/O-acetylserine efflux protein (195 aa).

The Periplasmic segment spans residues 1–7; the sequence is MTPTLLS. The chain crosses the membrane as a helical span at residues 8-28; that stretch reads AFWTYTLITAMTPGPNNILAL. Topologically, residues 29-46 are cytoplasmic; it reads SSATSHGFRQSTRVLAGM. The helical transmembrane segment at 47–67 threads the bilayer; sequence SLGFLIVMLLCAGISFSLAVI. The Periplasmic portion of the chain corresponds to 68 to 69; sequence DP. The chain crosses the membrane as a helical span at residues 70-90; that stretch reads AAVHLLSWAGAAYIVWLAWKI. Over 91–104 the chain is Cytoplasmic; it reads ATSPTKEDGLQTKP. A helical membrane pass occupies residues 105 to 125; it reads ISFWASFALQFVNVKIILYGV. Residues 126-141 lie on the Periplasmic side of the membrane; sequence TALSTFVLPQTQALSW. A helical membrane pass occupies residues 142–162; it reads VVGVSVLLAMIGTFGNVCWAL. Residues 163–176 are Cytoplasmic-facing; it reads AGHLFQRLFRQYGR. A helical membrane pass occupies residues 177-194; it reads QLNIVLALLLVYCAVRIF. A topological domain (periplasmic) is located at residue Y195.

This sequence belongs to the Rht family.

The protein resides in the cell inner membrane. It carries out the reaction O-acetyl-L-serine(in) = O-acetyl-L-serine(out). The catalysed reaction is L-cysteine(in) = L-cysteine(out). Functionally, exporter of O-acetylserine (OAS) and cysteine. In Escherichia coli O1:K1 / APEC, this protein is Cysteine/O-acetylserine efflux protein (eamB).